We begin with the raw amino-acid sequence, 505 residues long: ATP synthase subunit alpha (505 aa).

170–177 contributes to the ATP binding site; that stretch reads GDRQTGKT.

Belongs to the ATPase alpha/beta chains family. As to quaternary structure, F-type ATPases have 2 components, CF(1) - the catalytic core - and CF(0) - the membrane proton channel. CF(1) has five subunits: alpha(3), beta(3), gamma(1), delta(1), epsilon(1). CF(0) has four main subunits: a(1), b(1), b'(1) and c(9-12).

The protein resides in the cellular thylakoid membrane. The enzyme catalyses ATP + H2O + 4 H(+)(in) = ADP + phosphate + 5 H(+)(out). Produces ATP from ADP in the presence of a proton gradient across the membrane. The alpha chain is a regulatory subunit. This is ATP synthase subunit alpha from Trichodesmium erythraeum (strain IMS101).